The sequence spans 890 residues: Translation initiation factor IF-2 (890 aa).

The segment at 45–304 is disordered; it reads LIDHLNQKNS…LQQGFQKPAQ (260 aa). Positions 67-81 are enriched in polar residues; it reads STLNIPGTGGKSKSV. Residues 92 to 217 show a composition bias toward basic and acidic residues; that stretch reads VKRDPQEAER…RMAEENKWTD (126 aa). A compositionally biased stretch (basic residues) spans 252-266; it reads GRGRNAKAARPKKGN. A compositionally biased stretch (basic and acidic residues) spans 267 to 280; the sequence is KHAESKADREEARA. In terms of domain architecture, tr-type G spans 389–558; sequence PRAPVVTIMG…LLQAEVLELK (170 aa). Residues 398 to 405 are G1; sequence GHVDHGKT. 398-405 is a GTP binding site; sequence GHVDHGKT. The G2 stretch occupies residues 423-427; that stretch reads GITQH. The interval 444-447 is G3; the sequence is DTPG. Residues 444–448 and 498–501 contribute to the GTP site; these read DTPGH and NKID. The tract at residues 498–501 is G4; sequence NKID. The segment at 534–536 is G5; that stretch reads SAK. Lys-808 bears the N6-acetyllysine mark.

It belongs to the TRAFAC class translation factor GTPase superfamily. Classic translation factor GTPase family. IF-2 subfamily.

The protein localises to the cytoplasm. One of the essential components for the initiation of protein synthesis. Protects formylmethionyl-tRNA from spontaneous hydrolysis and promotes its binding to the 30S ribosomal subunits. Also involved in the hydrolysis of GTP during the formation of the 70S ribosomal complex. The polypeptide is Translation initiation factor IF-2 (Shigella sonnei (strain Ss046)).